A 120-amino-acid chain; its full sequence is C-C motif chemokine 2 (120 aa).

Residues 1 to 23 (MQRSSVLLCLLVIEATFCSLLMA) form the signal peptide. Gln24 bears the Pyrrolidone carboxylic acid mark. 2 disulfides stabilise this stretch: Cys33-Cys57 and Cys34-Cys73. Residues 91-120 (RTQQKQNSTAPQTSKPLNIRFTTQDPKNRS) form a disordered region. Polar residues predominate over residues 93-120 (QQKQNSTAPQTSKPLNIRFTTQDPKNRS). N-linked (GlcNAc...) asparagine glycosylation is present at Asn97.

This sequence belongs to the intercrine beta (chemokine CC) family. Monomer or homodimer; in equilibrium. Is tethered on endothelial cells by glycosaminoglycan (GAG) side chains of proteoglycans. Interacts with TNFAIP6 (via Link domain). Processing at the N-terminus can regulate receptor and target cell selectivity. Deletion of the N-terminal residue converts it from an activator of basophil to an eosinophil chemoattractant. Post-translationally, N-Glycosylated.

The protein resides in the secreted. Functionally, acts as a ligand for C-C chemokine receptor CCR2. Signals through binding and activation of CCR2 and induces a strong chemotactic response and mobilization of intracellular calcium ions. Exhibits a chemotactic activity for monocytes and basophils but not neutrophils or eosinophils. Plays an important role in mediating peripheral nerve injury-induced neuropathic pain. Increases NMDA-mediated synaptic transmission in both dopamine D1 and D2 receptor-containing neurons, which may be caused by MAPK/ERK-dependent phosphorylation of GRIN2B/NMDAR2B. The chain is C-C motif chemokine 2 (CCL2) from Cavia porcellus (Guinea pig).